Consider the following 58-residue polypeptide: MDKVKFKKGDLVKVIAGKHKGTEGPIIRVLREKSRVVIEGITNIKHVKPSQDNTEAGI.

The protein belongs to the universal ribosomal protein uL24 family. In terms of assembly, part of the 50S ribosomal subunit.

One of two assembly initiator proteins, it binds directly to the 5'-end of the 23S rRNA, where it nucleates assembly of the 50S subunit. In terms of biological role, one of the proteins that surrounds the polypeptide exit tunnel on the outside of the subunit. The polypeptide is Large ribosomal subunit protein uL24 (rplX) (Spiroplasma citri).